The chain runs to 42 residues: Photosystem II reaction center protein J (42 aa).

The helical transmembrane segment at 10-30 (IPLWIIGTLAGTLVIGLLAIF) threads the bilayer.

Belongs to the PsbJ family. PSII is composed of 1 copy each of membrane proteins PsbA, PsbB, PsbC, PsbD, PsbE, PsbF, PsbH, PsbI, PsbJ, PsbK, PsbL, PsbM, PsbT, PsbX, PsbY, PsbZ, Psb30/Ycf12, at least 3 peripheral proteins of the oxygen-evolving complex and a large number of cofactors. It forms dimeric complexes.

The protein localises to the plastid. Its subcellular location is the chloroplast thylakoid membrane. One of the components of the core complex of photosystem II (PSII). PSII is a light-driven water:plastoquinone oxidoreductase that uses light energy to abstract electrons from H(2)O, generating O(2) and a proton gradient subsequently used for ATP formation. It consists of a core antenna complex that captures photons, and an electron transfer chain that converts photonic excitation into a charge separation. The chain is Photosystem II reaction center protein J from Chaetosphaeridium globosum (Charophycean green alga).